The sequence spans 216 residues: ATP phosphoribosyltransferase (216 aa).

This sequence belongs to the ATP phosphoribosyltransferase family. Short subfamily. Heteromultimer composed of HisG and HisZ subunits.

The protein localises to the cytoplasm. The enzyme catalyses 1-(5-phospho-beta-D-ribosyl)-ATP + diphosphate = 5-phospho-alpha-D-ribose 1-diphosphate + ATP. It functions in the pathway amino-acid biosynthesis; L-histidine biosynthesis; L-histidine from 5-phospho-alpha-D-ribose 1-diphosphate: step 1/9. Its function is as follows. Catalyzes the condensation of ATP and 5-phosphoribose 1-diphosphate to form N'-(5'-phosphoribosyl)-ATP (PR-ATP). Has a crucial role in the pathway because the rate of histidine biosynthesis seems to be controlled primarily by regulation of HisG enzymatic activity. The protein is ATP phosphoribosyltransferase of Prochlorococcus marinus (strain MIT 9211).